Here is a 194-residue protein sequence, read N- to C-terminus: Ribosomal RNA small subunit methyltransferase G (194 aa).

S-adenosyl-L-methionine-binding positions include Gly70, Tyr75, 121–122, and Arg135; that span reads VE.

It belongs to the methyltransferase superfamily. RNA methyltransferase RsmG family.

It localises to the cytoplasm. It catalyses the reaction guanosine(527) in 16S rRNA + S-adenosyl-L-methionine = N(7)-methylguanosine(527) in 16S rRNA + S-adenosyl-L-homocysteine. In terms of biological role, specifically methylates the N7 position of guanine in position 527 of 16S rRNA. This is Ribosomal RNA small subunit methyltransferase G from Aliarcobacter butzleri (strain RM4018) (Arcobacter butzleri).